Consider the following 901-residue polypeptide: Aconitate hydratase A (901 aa).

[4Fe-4S] cluster-binding residues include Cys-443, Cys-509, and Cys-512.

It belongs to the aconitase/IPM isomerase family. Monomer. The cofactor is [4Fe-4S] cluster.

The enzyme catalyses citrate = D-threo-isocitrate. The catalysed reaction is (2S,3R)-3-hydroxybutane-1,2,3-tricarboxylate = 2-methyl-cis-aconitate + H2O. It participates in carbohydrate metabolism; tricarboxylic acid cycle; isocitrate from oxaloacetate: step 2/2. Its pathway is organic acid metabolism; propanoate degradation. Its function is as follows. Involved in the catabolism of short chain fatty acids (SCFA) via the tricarboxylic acid (TCA)(acetyl degradation route) and probably the 2-methylcitrate cycle I (propionate degradation route). Catalyzes the reversible isomerization of citrate to isocitrate via cis-aconitate. Could catalyze the hydration of 2-methyl-cis-aconitate to yield (2R,3S)-2-methylisocitrate. The apo form of AcnA functions as a RNA-binding regulatory protein. The polypeptide is Aconitate hydratase A (acnA) (Staphylococcus aureus (strain MRSA252)).